The following is a 445-amino-acid chain: Histamine H3 receptor (445 aa).

At 1 to 39 (MERAPPDGLMNASGALAGEAAAAGGARGFSAAWTAVLAA) the chain is on the extracellular side. A glycan (N-linked (GlcNAc...) asparagine) is linked at asparagine 11. Residues 40-60 (LMALLIVATVLGNALVMLAFV) form a helical membrane-spanning segment. Residues 61–70 (ADSSLRTQNN) are Cytoplasmic-facing. A helical transmembrane segment spans residues 71 to 91 (FFLLNLAISDFLVGAFCIPLY). Over 92 to 108 (VPYVLTGRWTFGRGLCK) the chain is Extracellular. A disulfide bridge connects residues cysteine 107 and cysteine 188. The helical transmembrane segment at 109 to 129 (LWLVVDYLLCASSVFNIVLIS) threads the bilayer. The Cytoplasmic segment spans residues 130–156 (YDRFLSVTRAVSYRAQQGDTRRAVRKM). The helical transmembrane segment at 157-177 (ALVWVLAFLLYGPAILSWEYL) threads the bilayer. Topologically, residues 178–196 (SGGSSIPEGHCYAEFFYNW) are extracellular. Residues 197–217 (YFLITASTLEFFTPFLSVTFF) form a helical membrane-spanning segment. Topologically, residues 218–359 (NLSIYLNIQR…LSRDKKVAKS (142 aa)) are cytoplasmic. 2 disordered regions span residues 234–259 (DGGREAGPEPPPDAQPSPPPAPPSCW) and 273–336 (HRYG…LEKR). Positions 241-256 (PEPPPDAQPSPPPAPP) are enriched in pro residues. The span at 289–299 (AGLGGGSGGGA) shows a compositional bias: gly residues. A compositionally biased stretch (low complexity) spans 300 to 312 (AASPTSSSGSSSR). A helical membrane pass occupies residues 360-380 (LAIIVSIFGLCWAPYTLLMII). The Extracellular portion of the chain corresponds to 381–396 (RAACHGHCVPDYWYET). The helical transmembrane segment at 397–417 (SFWLLWANSAVNPVLYPLCHY) threads the bilayer. Residues 418–445 (SFRRAFTKLLCPQKLKVQPHGSLEQCWK) are Cytoplasmic-facing. Position 439 is a phosphoserine (serine 439).

Belongs to the G-protein coupled receptor 1 family.

It is found in the cell membrane. In terms of biological role, the H3 subclass of histamine receptors could mediate the histamine signals in CNS and peripheral nervous system. Signals through the inhibition of adenylate cyclase and displays high constitutive activity (spontaneous activity in the absence of agonist). The chain is Histamine H3 receptor (Hrh3) from Mus musculus (Mouse).